A 200-amino-acid chain; its full sequence is Oligoribonuclease (200 aa).

The Exonuclease domain occupies L20 to L183. Residue Y141 is part of the active site.

Belongs to the oligoribonuclease family.

It localises to the cytoplasm. Its function is as follows. 3'-to-5' exoribonuclease specific for small oligoribonucleotides. The protein is Oligoribonuclease of Burkholderia vietnamiensis (strain G4 / LMG 22486) (Burkholderia cepacia (strain R1808)).